The following is a 132-amino-acid chain: Small ribosomal subunit protein uS8 (132 aa).

The protein belongs to the universal ribosomal protein uS8 family. As to quaternary structure, part of the 30S ribosomal subunit. Contacts proteins S5 and S12.

In terms of biological role, one of the primary rRNA binding proteins, it binds directly to 16S rRNA central domain where it helps coordinate assembly of the platform of the 30S subunit. The chain is Small ribosomal subunit protein uS8 from Geobacter sulfurreducens (strain ATCC 51573 / DSM 12127 / PCA).